The sequence spans 437 residues: Sperm-associated antigen 4 protein (437 aa).

A compositionally biased stretch (low complexity) spans 1 to 12; sequence MRRSSRPGSASS. The tract at residues 1–88 is disordered; sequence MRRSSRPGSA…KPAPRSHNWQ (88 aa). Polar residues-rich tracts occupy residues 19 to 31 and 72 to 88; these read NFFS…SITS and WAGS…HNWQ. A run of 2 helical transmembrane segments spans residues 135–155 and 166–186; these read FLSL…DVLV and FLFT…LGLL. Positions 197 to 244 form a coiled coil; the sequence is KEMLTLSEYHERVRSQGQQLQQLQAELDKLHKEVSTVRAANSERVAKL. In terms of domain architecture, SUN spans 265–425; it reads GASIDLQKTS…YRVRAHGVRT (161 aa).

In terms of assembly, homodimer. Interacts with ODF1. May associate with microtubules. Interacts with SUN3 and SYNE1; suggesting the formation of a spermatogenesis-specific LINC complex; a SUN domain-based heterotrimer with SUN3 may associate with SYNE1. Interacts with SEPT12 and LMNB1; during spermatogenesis. As to expression, predominantly epressed in testis. Expressed in ejaculated spermatozoa (at protein level).

It is found in the membrane. It localises to the cytoplasm. The protein localises to the cytoskeleton. Its subcellular location is the flagellum axoneme. The protein resides in the nucleus envelope. It is found in the nucleus inner membrane. In terms of biological role, involved in spermatogenesis. Required for sperm head formation but not required to establish and maintain general polarity of the sperm head. Required for anchoring and organization of the manchette. Required for targeting of SUN3 and probably SYNE1 through a probable SUN1:SYNE3 LINC complex to the nuclear envelope and involved in accurate posterior sperm head localization of the complex. May anchor SUN3 the nuclear envelope. Involved in maintenance of the nuclear envelope integrity. May assist the organization and assembly of outer dense fibers (ODFs), a specific structure of the sperm tail. This is Sperm-associated antigen 4 protein (SPAG4) from Homo sapiens (Human).